We begin with the raw amino-acid sequence, 412 residues long: Phosphatidylinositol 3,4,5-trisphosphate 3-phosphatase and protein-tyrosine-phosphatase PTEN1 (412 aa).

The region spanning 42 to 211 (RRLIIGGYDL…KYWSDLLSFS (170 aa)) is the Phosphatase tensin-type domain. Catalysis depends on cysteine 152, which acts as the Phosphocysteine intermediate. The C2 tensin-type domain maps to 239–396 (VDSVFFVVSE…FSLELLFGPA (158 aa)).

Belongs to the PTEN phosphatase protein family. Expressed exclusively in pollen grains during the late stage of development (at protein level).

The catalysed reaction is O-phospho-L-tyrosyl-[protein] + H2O = L-tyrosyl-[protein] + phosphate. The enzyme catalyses a 1,2-diacyl-sn-glycero-3-phospho-(1D-myo-inositol-3,4,5-trisphosphate) + H2O = a 1,2-diacyl-sn-glycero-3-phospho-(1D-myo-inositol-4,5-bisphosphate) + phosphate. Inhibited by vanadate. In terms of biological role, protein tyrosine phosphatase that also exhibits lipid phosphatase activity. Can use phosphatidylinositol substrates such as PtdIns(3,4,5)P(3) as substrate. Pollen-specific phosphatase required for pollen development. The polypeptide is Phosphatidylinositol 3,4,5-trisphosphate 3-phosphatase and protein-tyrosine-phosphatase PTEN1 (Arabidopsis thaliana (Mouse-ear cress)).